We begin with the raw amino-acid sequence, 75 residues long: Small, acid-soluble spore protein Tlp (75 aa).

The protein belongs to the Tlp family.

It localises to the spore core. The polypeptide is Small, acid-soluble spore protein Tlp (Geobacillus thermodenitrificans (strain NG80-2)).